Consider the following 334-residue polypeptide: S-adenosylmethionine decarboxylase proenzyme (334 aa).

Substrate is bound at residue F7. Active-site residues include E8 and E11. Substrate is bound at residue E67. Catalysis depends on S68, which acts as the Schiff-base intermediate with substrate; via pyruvic acid. Residue S68 is modified to Pyruvic acid (Ser); by autocatalysis. C82 acts as the Proton donor; for catalytic activity in catalysis. Substrate is bound at residue F223. Catalysis depends on proton acceptor; for processing activity residues S229 and H243. E247 is a binding site for substrate. At S298 the chain carries Phosphoserine.

Belongs to the eukaryotic AdoMetDC family. In terms of assembly, heterotetramer of two alpha and two beta chains. Pyruvate is required as a cofactor. In terms of processing, is synthesized initially as an inactive proenzyme. Formation of the active enzyme involves a self-maturation process in which the active site pyruvoyl group is generated from an internal serine residue via an autocatalytic post-translational modification. Two non-identical subunits are generated from the proenzyme in this reaction, and the pyruvate is formed at the N-terminus of the alpha chain, which is derived from the carboxyl end of the proenzyme. The post-translation cleavage follows an unusual pathway, termed non-hydrolytic serinolysis, in which the side chain hydroxyl group of the serine supplies its oxygen atom to form the C-terminus of the beta chain, while the remainder of the serine residue undergoes an oxidative deamination to produce ammonia and the pyruvoyl group blocking the N-terminus of the alpha chain.

The catalysed reaction is S-adenosyl-L-methionine + H(+) = S-adenosyl 3-(methylsulfanyl)propylamine + CO2. It functions in the pathway amine and polyamine biosynthesis; S-adenosylmethioninamine biosynthesis; S-adenosylmethioninamine from S-adenosyl-L-methionine: step 1/1. Essential for biosynthesis of the polyamines spermidine and spermine. Promotes maintenance and self-renewal of embryonic stem cells, by maintaining spermine levels. The polypeptide is S-adenosylmethionine decarboxylase proenzyme (AMD1) (Bos taurus (Bovine)).